The primary structure comprises 169 residues: MQQIEVKRLLVNYKTLEEFRNFREFGAAELSMKDDLEANIIENDSESPFYGIYFGGKLVARMSLYRIDGKYDRYFEPPQDYLELWKLEVLEPYRGKGFGRALVDFAKSFNLPVKTNARQRSNEFWTKMGFEPVTYQTDRDRGESPYVWYPEGVKEQLSEDEGSVETLEN.

The 157-residue stretch at 4-160 folds into the N-acetyltransferase domain; it reads IEVKRLLVNY…EGVKEQLSED (157 aa).

This is an uncharacterized protein from Halalkalibacterium halodurans (strain ATCC BAA-125 / DSM 18197 / FERM 7344 / JCM 9153 / C-125) (Bacillus halodurans).